The sequence spans 137 residues: MPTINQLVRQGRKSKTYKSDSPALSRNFNSIKKSYTEANSPQKRGVCTSVRTMTPKKPNSALRKVARVRLTNGMEVLSYIPGIGHNLQEHSVVLIRGGRVKDLPGVRYHIVRGALDTAAVQNRMQGRSKYGAKKPKK.

Positions 1-25 (MPTINQLVRQGRKSKTYKSDSPALS) are disordered. A 3-methylthioaspartic acid modification is found at D102.

It belongs to the universal ribosomal protein uS12 family. In terms of assembly, part of the 30S ribosomal subunit. Contacts proteins S8 and S17. May interact with IF1 in the 30S initiation complex.

Its function is as follows. With S4 and S5 plays an important role in translational accuracy. Functionally, interacts with and stabilizes bases of the 16S rRNA that are involved in tRNA selection in the A site and with the mRNA backbone. Located at the interface of the 30S and 50S subunits, it traverses the body of the 30S subunit contacting proteins on the other side and probably holding the rRNA structure together. The combined cluster of proteins S8, S12 and S17 appears to hold together the shoulder and platform of the 30S subunit. The polypeptide is Small ribosomal subunit protein uS12 (Finegoldia magna (strain ATCC 29328 / DSM 20472 / WAL 2508) (Peptostreptococcus magnus)).